We begin with the raw amino-acid sequence, 2115 residues long: Non-reducing polyketide synthase PFUR17_0229 (2115 aa).

Residues 8-246 (VLFGDQTVDP…ISLPITAAFH (239 aa)) are N-terminal acylcarrier protein transacylase (SAT) domain (SAT). A Ketosynthase family 3 (KS3) domain is found at 367–796 (SGDIAIVGVA…GGNTSLVLED (430 aa)). Catalysis depends on for beta-ketoacyl synthase activity residues C539, H674, and H713. A malonyl-CoA:ACP transacylase (MAT) domain region spans residues 895 to 1218 (IFAFTGQGAQ…SISNAYNSGA (324 aa)). A product template (PT) domain region spans residues 1279 to 1592 (TTCLQKVESE…KRNILQSLLS (314 aa)). The segment at 1282–1413 (LQKVESETFT…CTVMYGDGQQ (132 aa)) is N-terminal hotdog fold. Residues 1282 to 1588 (LQKVESETFT…FQKMKRNILQ (307 aa)) form the PKS/mFAS DH domain. The Proton acceptor; for dehydratase activity role is filled by H1315. The interval 1441 to 1588 (VHRLLKEMIY…FQKMKRNILQ (148 aa)) is C-terminal hotdog fold. The Proton donor; for dehydratase activity role is filled by D1501. The interval 1594–1613 (GHEETPPARPVPSKRTVQGS) is disordered. Residues 1626–1703 (KAASGGFSNI…QLRNFFLDKV (78 aa)) enclose the Carrier 1 domain. S1663 carries the O-(pantetheine 4'-phosphoryl)serine modification. The disordered stretch occupies residues 1710–1742 (FDDEESEMSSSTAGSTPGSSTSHGNQNTTVTTP). The segment covering 1718-1733 (SSSTAGSTPGSSTSHG) has biased composition (low complexity). Residues 1742 to 1819 (PAEPDVVAIL…DVQKALGVPS (78 aa)) form the Carrier 2 domain. S1779 is subject to O-(pantetheine 4'-phosphoryl)serine. The segment at 1861-2097 (LFLLPDGAGS…VVGGNHFSIM (237 aa)) is thioesterase (TE) domain.

Requires pantetheine 4'-phosphate as cofactor.

The catalysed reaction is 6 malonyl-CoA + 2 acetyl-CoA + 5 H(+) = o-orsellinate depside + 6 CO2 + 8 CoA + H2O. Functionally, non-reducing polyketide synthase; part of a gene cluster that mediates the biosynthesis of a yet unidentified depside/depsidone compound. The first step in the pathway is performed by the PKS PFUR17_0229 that condenses 2 acetyl-CoA starter units with 6 malonyl-CoA units to produce lecanoric acid (LA), also known as orsellinate depside. The biosynthesis occurs via the formation of 2 orsellinate intermediates fused together by the C-terminal thioesterase (TE) domain that finally releases lecanoric acid. In addition to the PKS gene, the PFUR17 gene cluster contains closely linked genes encoding a cytochrome P-450 and a laccase (phenol oxidase), directly upstream and downstream respectively, so it is likely that lecanoric acid is an intermediate in a longer biosynthetic pathway. This chain is Non-reducing polyketide synthase PFUR17_0229, found in Pseudevernia furfuracea (Tree moss).